Consider the following 377-residue polypeptide: Nitric oxide reductase FlRd-NAD(+) reductase (377 aa).

Belongs to the FAD-dependent oxidoreductase family. It depends on FAD as a cofactor.

The protein resides in the cytoplasm. It carries out the reaction 2 reduced [nitric oxide reductase rubredoxin domain] + NAD(+) + H(+) = 2 oxidized [nitric oxide reductase rubredoxin domain] + NADH. The protein operates within nitrogen metabolism; nitric oxide reduction. Functionally, one of at least two accessory proteins for anaerobic nitric oxide (NO) reductase. Reduces the rubredoxin moiety of NO reductase. The sequence is that of Nitric oxide reductase FlRd-NAD(+) reductase from Shigella boydii serotype 18 (strain CDC 3083-94 / BS512).